A 189-amino-acid chain; its full sequence is GTPase NRas (189 aa).

Residues 10–18 (GAGGVGKSA) and 29–30 (VD) each bind GTP. Residues 32–40 (YDPTIEDSY) carry the Effector region motif. 57 to 61 (DTAGQ) provides a ligand contact to GTP. Ser89 carries the post-translational modification Phosphoserine. 116–119 (NKCD) lines the GTP pocket. Positions 166–185 (YRMKKLNSSDDGTQGCMGLP) are hypervariable region. Residue Lys170 forms a Glycyl lysine isopeptide (Lys-Gly) (interchain with G-Cter in ubiquitin) linkage. A lipid anchor (S-palmitoyl cysteine) is attached at Cys181. Cys186 carries the S-farnesyl cysteine lipid modification. The propeptide at 187–189 (VVM) is removed in mature form.

This sequence belongs to the small GTPase superfamily. Ras family. In terms of assembly, interacts (active GTP-bound form preferentially) with RGS14. Interacts (active GTP-bound form) with RASSF7. Interacts (active GTP-bound form) with both SHOC2 and PP1c (all isoforms) to form a tertiary complex; SHOC2 and PP1c preferably bind M-Ras/MRAS, but they also bind K-Ras/KRAS, N-Ras/NRAS and H-Ras/HRAS. Palmitoylated by the ZDHHC9-GOLGA7 complex. Depalmitoylated by ABHD17A, ABHD17B and ABHD17C. A continuous cycle of de- and re-palmitoylation regulates rapid exchange between plasma membrane and Golgi. In terms of processing, acetylation at Lys-104 prevents interaction with guanine nucleotide exchange factors (GEFs). Post-translationally, ubiquitinated by the BCR(LZTR1) E3 ubiquitin ligase complex at Lys-170 in a non-degradative manner, leading to inhibit Ras signaling by decreasing Ras association with membranes. Phosphorylation at Ser-89 enhances NRAS association with its downstream effectors.

It localises to the cell membrane. It is found in the golgi apparatus membrane. The enzyme catalyses GTP + H2O = GDP + phosphate + H(+). Alternates between an inactive form bound to GDP and an active form bound to GTP. Activated by a guanine nucleotide-exchange factor (GEF) and inactivated by a GTPase-activating protein (GAP). Ras proteins bind GDP/GTP and possess intrinsic GTPase activity. This is GTPase NRas (NRAS) from Pongo abelii (Sumatran orangutan).